The primary structure comprises 40 residues: Large ribosomal subunit protein bL36B (40 aa).

This sequence belongs to the bacterial ribosomal protein bL36 family.

This is Large ribosomal subunit protein bL36B from Leifsonia xyli subsp. xyli (strain CTCB07).